The sequence spans 61 residues: Large ribosomal subunit protein bL32 (61 aa).

Residues 1–16 show a composition bias toward basic residues; it reads MPTPKKKTSRSKRDMR. The disordered stretch occupies residues 1-47; it reads MPTPKKKTSRSKRDMRRSHDGLTAPAIAVEKKTGELVRPHRAHKGAD. Residues 29 to 38 are compositionally biased toward basic and acidic residues; it reads VEKKTGELVR.

Belongs to the bacterial ribosomal protein bL32 family.

This Bdellovibrio bacteriovorus (strain ATCC 15356 / DSM 50701 / NCIMB 9529 / HD100) protein is Large ribosomal subunit protein bL32.